The following is a 187-amino-acid chain: POM121 and ZP3 fusion protein (187 aa).

Residues 166–187 (GTPSHSRRQPRVVSQWSTSASL) are disordered. Residues 177 to 187 (VVSQWSTSASL) show a composition bias toward polar residues.

Expressed in spleen, thymus, pancreas, testis, ovary, small intestine, colon and lymphocytes.

This is POM121 and ZP3 fusion protein (POMZP3) from Homo sapiens (Human).